Consider the following 648-residue polypeptide: Spastin (648 aa).

The Cytoplasmic portion of the chain corresponds to M1–P40. The helical intramembrane region spans L41–F61. The Cytoplasmic portion of the chain corresponds to V62–V648. Residues H99–L174 enclose the MIT domain. A disordered region spans residues P188–V346. Residues T247 to S266 show a composition bias toward low complexity. G414–T421 is a binding site for ATP.

This sequence belongs to the AAA ATPase family. Spastin subfamily. As to quaternary structure, homohexamer. The homohexamer is stabilized by ATP-binding. The homohexamer may adopt a ring conformation through which microtubules pass prior to being severed. Interacts with microtubules.

It localises to the membrane. The protein localises to the cytoplasm. It is found in the cytoskeleton. Its subcellular location is the microtubule organizing center. The protein resides in the centrosome. It catalyses the reaction n ATP + n H2O + a microtubule = n ADP + n phosphate + (n+1) alpha/beta tubulin heterodimers.. Its function is as follows. ATP-dependent microtubule severing protein. Microtubule severing may promote reorganization of cellular microtubule arrays and the release of microtubules from the microtubule organizing center following nucleation. The protein is Spastin (spas) of Ixodes scapularis (Black-legged tick).